The primary structure comprises 103 residues: Non-histone chromosomal protein HMG-14B (103 aa).

Residues 1–103 (MPKRKVAASR…AVEKEEVKSE (103 aa)) are disordered. The span at 29 to 50 (VPDKAEPKAKALAAKDKSENKK) shows a compositional bias: basic and acidic residues. Residues 51–60 (AQSKGKKGPK) show a composition bias toward basic residues. Over residues 94 to 103 (AVEKEEVKSE) the composition is skewed to basic and acidic residues.

The protein belongs to the HMGN family.

The protein resides in the nucleus. Its function is as follows. Binds to the inner side of the nucleosomal DNA thus altering the interaction between the DNA and the histone octamer. May be involved in the process which maintains transcribable genes in a unique chromatin conformation. The sequence is that of Non-histone chromosomal protein HMG-14B (HMG14) from Gallus gallus (Chicken).